A 167-amino-acid polypeptide reads, in one-letter code: MPEQIDGNKLDLEERVVTINRVAKVVKGGRRFRFTALVVVGDKNGHVGFGTGKAQEVPDAIRKAVEDAKKNMVFVPTVDTTIPHTVVGHFGGGEILLKPASAGSGVTAGGPVRAVLELAGVADVSSKSLGSNTPINMVRATIDGIKQLKNAEDVAKLRGKTVEELLG.

The S5 DRBM domain occupies 12–75 (LEERVVTINR…EDAKKNMVFV (64 aa)).

It belongs to the universal ribosomal protein uS5 family. Part of the 30S ribosomal subunit. Contacts proteins S4 and S8.

With S4 and S12 plays an important role in translational accuracy. In terms of biological role, located at the back of the 30S subunit body where it stabilizes the conformation of the head with respect to the body. The sequence is that of Small ribosomal subunit protein uS5 from Listeria innocua serovar 6a (strain ATCC BAA-680 / CLIP 11262).